Consider the following 122-residue polypeptide: Large ribosomal subunit protein uL14c (122 aa).

Belongs to the universal ribosomal protein uL14 family. Part of the 50S ribosomal subunit.

It localises to the plastid. It is found in the chloroplast. Functionally, binds to 23S rRNA. The polypeptide is Large ribosomal subunit protein uL14c (Morus indica (Mulberry)).